A 200-amino-acid chain; its full sequence is Probable E3 ubiquitin-protein ligase ATL45 (200 aa).

Residues 26-46 (MVVILSALLCALVCVAGLAAV) form a helical membrane-spanning segment. An RING-type; atypical zinc finger spans residues 113–155 (CAICITEFSEGEEIRILPLCSHAFHVACIDKWLTSRSSCPSCR).

Belongs to the RING-type zinc finger family. ATL subfamily. In terms of assembly, interacts with BIK1.

It localises to the membrane. The catalysed reaction is S-ubiquitinyl-[E2 ubiquitin-conjugating enzyme]-L-cysteine + [acceptor protein]-L-lysine = [E2 ubiquitin-conjugating enzyme]-L-cysteine + N(6)-ubiquitinyl-[acceptor protein]-L-lysine.. It functions in the pathway protein modification; protein ubiquitination. E3 ubiquitin-protein ligase that possess E3 ubiquitin ligase activity in vitro and mediates protein monoubiquitination. Triggers the monoubiquitination of phosphorylated BIK1 in response to pathogen-associated molecular pattern (PAMP) detection. May be involved in the early steps of the plant defense signaling pathway. This Arabidopsis thaliana (Mouse-ear cress) protein is Probable E3 ubiquitin-protein ligase ATL45.